The sequence spans 280 residues: MKLLKILSLVCLSISIGACAEHSMSRAKTSTIPQVNNSIIDQNVQALFNEISADAVFVTYDGQNIKKYGTHLDRAKTAYIPASTFKIANALIGLENHKATSTEIFKWDGKPRFFKAWDKDFTLGEAMQASTVPVYQELARRIGPSLMQSELQRIGYGNMQIGTEVDQFWLKGPLTITPIQEVKFVYDLAQGQLPFKPEVQQQVKEMLYVERRGENRLYAKSGWGMAVDPQVGWYVGFVEKADGQVVAFALNMQMKAGDDIALRKQLSLDVLDKLGVFHYL.

An N-terminal signal peptide occupies residues Met1–Ala18. Cys19 carries the N-palmitoyl cysteine lipid modification. Cys19 is lipidated: S-diacylglycerol cysteine. Ser83 serves as the catalytic Acyl-ester intermediate. A beta-lactam is bound by residues Ser83, Lys86, Ser130, Ser221, Trp223, and Arg263. Lys86 bears the N6-carboxylysine mark.

Belongs to the class-D beta-lactamase family. Monomer. Dimer. In terms of processing, carboxylated on the epsilon-amino group of a lysine, with the resulting carbamate functional group serving as a general base. Probably N-carboxylated at Lys-86 at neutral pH in vivo and undergoes complete N-decarboxylation, at pH 4.1, in vitro. N-carboxylation at Lys-86 probably increases catalytic activity under physiological conditions.

Its subcellular location is the cell membrane. The enzyme catalyses a beta-lactam + H2O = a substituted beta-amino acid. With respect to regulation, activated approximately 3-fold by the presence of 0.1M NaHCO3. Functionally, class D beta-lactamase which confers resistance to the beta-lactam antibiotics, including penicillins and oxacillin, and moderate resistance to carbapenems such as imipenem; in the DH10B strain of E.coli. Acts via hydrolysis of the beta-lactam ring. Has benzylpenicillin-, oxacillin-, cephalothin- and imipenem-hydrolyzing activities. The polypeptide is Beta-lactamase OXA-58 (Acinetobacter baumannii).